The following is a 355-amino-acid chain: Probable aldo-keto reductase 3 (355 aa).

Residue Tyr70 is the Proton donor of the active site. His138 lines the substrate pocket. Position 217 to 227 (217 to 227 (SPLGRGFFSSG)) interacts with NADP(+).

This sequence belongs to the aldo/keto reductase family.

The sequence is that of Probable aldo-keto reductase 3 from Oryza sativa subsp. indica (Rice).